Here is a 292-residue protein sequence, read N- to C-terminus: Protease HtpX homolog (292 aa).

A run of 2 helical transmembrane segments spans residues 4–24 (ILLFVLTNLAVVLVLGVVASL) and 39–59 (GALLGFALVMGFGGAFISLLI). Histidine 144 lines the Zn(2+) pocket. Glutamate 145 is an active-site residue. Zn(2+) is bound at residue histidine 148. 2 helical membrane passes run 159 to 179 (LIQGVMNTFVVFLSRVIGYAV) and 199 to 219 (VTTIVLDIALGFVAAIIVAWF). Glutamate 224 contacts Zn(2+).

Belongs to the peptidase M48B family. Requires Zn(2+) as cofactor.

It localises to the cell inner membrane. In Verminephrobacter eiseniae (strain EF01-2), this protein is Protease HtpX homolog.